Here is a 117-residue protein sequence, read N- to C-terminus: Large ribosomal subunit protein bL31B (117 aa).

The segment at 75 to 117 (KRFERKKEASPADTPPESDSTTENASVEKKAEKKRVTAKGSKK) is disordered. Residues 100 to 109 (SVEKKAEKKR) are compositionally biased toward basic and acidic residues.

This sequence belongs to the bacterial ribosomal protein bL31 family. Type B subfamily. Part of the 50S ribosomal subunit.

This is Large ribosomal subunit protein bL31B from Protochlamydia amoebophila (strain UWE25).